Reading from the N-terminus, the 349-residue chain is Carbamoyl phosphate synthase small chain (349 aa).

The CPSase stretch occupies residues 1–170 (MKAKLILENG…KYEISGEGKK (170 aa)). 3 residues coordinate L-glutamine: S45, G218, and G220. One can recognise a Glutamine amidotransferase type-1 domain in the interval 170 to 349 (KVAIIDFGIK…IFDEFMKYAL (180 aa)). C245 (nucleophile) is an active-site residue. L246, Q249, N287, G289, and Y290 together coordinate L-glutamine. Catalysis depends on residues H327 and E329.

Belongs to the CarA family. Composed of two chains; the small (or glutamine) chain promotes the hydrolysis of glutamine to ammonia, which is used by the large (or ammonia) chain to synthesize carbamoyl phosphate. Tetramer of heterodimers (alpha,beta)4.

It carries out the reaction hydrogencarbonate + L-glutamine + 2 ATP + H2O = carbamoyl phosphate + L-glutamate + 2 ADP + phosphate + 2 H(+). It catalyses the reaction L-glutamine + H2O = L-glutamate + NH4(+). Its pathway is amino-acid biosynthesis; L-arginine biosynthesis; carbamoyl phosphate from bicarbonate: step 1/1. It functions in the pathway pyrimidine metabolism; UMP biosynthesis via de novo pathway; (S)-dihydroorotate from bicarbonate: step 1/3. Its function is as follows. Small subunit of the glutamine-dependent carbamoyl phosphate synthetase (CPSase). CPSase catalyzes the formation of carbamoyl phosphate from the ammonia moiety of glutamine, carbonate, and phosphate donated by ATP, constituting the first step of 2 biosynthetic pathways, one leading to arginine and/or urea and the other to pyrimidine nucleotides. The small subunit (glutamine amidotransferase) binds and cleaves glutamine to supply the large subunit with the substrate ammonia. The protein is Carbamoyl phosphate synthase small chain of Clostridium perfringens (strain 13 / Type A).